Reading from the N-terminus, the 996-residue chain is Alanine--tRNA ligase, chloroplastic/mitochondrial (996 aa).

The Zn(2+) site is built by histidine 677, histidine 681, cysteine 779, and histidine 783.

Belongs to the class-II aminoacyl-tRNA synthetase family. As to quaternary structure, monomer. Zn(2+) serves as cofactor.

It is found in the plastid. Its subcellular location is the chloroplast. It localises to the mitochondrion. It carries out the reaction tRNA(Ala) + L-alanine + ATP = L-alanyl-tRNA(Ala) + AMP + diphosphate. Functionally, catalyzes the attachment of alanine to tRNA(Ala) in a two-step reaction: alanine is first activated by ATP to form Ala-AMP and then transferred to the acceptor end of tRNA(Ala). Also edits incorrectly charged tRNA(Ala) via its editing domain. This chain is Alanine--tRNA ligase, chloroplastic/mitochondrial, found in Oryza sativa subsp. indica (Rice).